The primary structure comprises 291 residues: Gamma-soluble NSF attachment protein (291 aa).

Belongs to the SNAP family.

Its subcellular location is the membrane. Functionally, required for vesicular transport between the endoplasmic reticulum and the Golgi apparatus. Binds to SNARE complex and then recruits NSF to disassemble it. The sequence is that of Gamma-soluble NSF attachment protein (GSNAP) from Arabidopsis thaliana (Mouse-ear cress).